The primary structure comprises 101 residues: Small ribosomal subunit protein uS14 (101 aa).

It belongs to the universal ribosomal protein uS14 family. As to quaternary structure, part of the 30S ribosomal subunit. Contacts proteins S3 and S10.

Functionally, binds 16S rRNA, required for the assembly of 30S particles and may also be responsible for determining the conformation of the 16S rRNA at the A site. The chain is Small ribosomal subunit protein uS14 from Cupriavidus metallidurans (strain ATCC 43123 / DSM 2839 / NBRC 102507 / CH34) (Ralstonia metallidurans).